A 432-amino-acid polypeptide reads, in one-letter code: Enolase (432 aa).

Gln-167 contributes to the (2R)-2-phosphoglycerate binding site. Glu-209 acts as the Proton donor in catalysis. Mg(2+) is bound by residues Asp-246, Glu-290, and Asp-317. Positions 342, 371, 372, and 393 each coordinate (2R)-2-phosphoglycerate. Lys-342 functions as the Proton acceptor in the catalytic mechanism.

Belongs to the enolase family. As to quaternary structure, component of the RNA degradosome, a multiprotein complex involved in RNA processing and mRNA degradation. Requires Mg(2+) as cofactor.

The protein localises to the cytoplasm. Its subcellular location is the secreted. The protein resides in the cell surface. The catalysed reaction is (2R)-2-phosphoglycerate = phosphoenolpyruvate + H2O. It participates in carbohydrate degradation; glycolysis; pyruvate from D-glyceraldehyde 3-phosphate: step 4/5. Its function is as follows. Catalyzes the reversible conversion of 2-phosphoglycerate (2-PG) into phosphoenolpyruvate (PEP). It is essential for the degradation of carbohydrates via glycolysis. In Salmonella agona (strain SL483), this protein is Enolase.